The following is a 512-amino-acid chain: Maturase K (512 aa).

It belongs to the intron maturase 2 family. MatK subfamily.

Its subcellular location is the plastid. The protein resides in the chloroplast. Usually encoded in the trnK tRNA gene intron. Probably assists in splicing its own and other chloroplast group II introns. The polypeptide is Maturase K (Platanus occidentalis (Sycamore)).